We begin with the raw amino-acid sequence, 347 residues long: 4-hydroxythreonine-4-phosphate dehydrogenase (347 aa).

Substrate-binding residues include His137 and Thr138. A divalent metal cation is bound by residues His174, His219, and His274. Substrate is bound by residues Lys282, Asn291, and Arg300.

The protein belongs to the PdxA family. As to quaternary structure, homodimer. Zn(2+) serves as cofactor. Requires Mg(2+) as cofactor. It depends on Co(2+) as a cofactor.

It localises to the cytoplasm. It catalyses the reaction 4-(phosphooxy)-L-threonine + NAD(+) = 3-amino-2-oxopropyl phosphate + CO2 + NADH. It functions in the pathway cofactor biosynthesis; pyridoxine 5'-phosphate biosynthesis; pyridoxine 5'-phosphate from D-erythrose 4-phosphate: step 4/5. Catalyzes the NAD(P)-dependent oxidation of 4-(phosphooxy)-L-threonine (HTP) into 2-amino-3-oxo-4-(phosphooxy)butyric acid which spontaneously decarboxylates to form 3-amino-2-oxopropyl phosphate (AHAP). The chain is 4-hydroxythreonine-4-phosphate dehydrogenase from Cupriavidus pinatubonensis (strain JMP 134 / LMG 1197) (Cupriavidus necator (strain JMP 134)).